Consider the following 246-residue polypeptide: Isoprenyl transferase 1 (246 aa).

Residue Asp-19 is part of the active site. Asp-19 contributes to the Mg(2+) binding site. Substrate-binding positions include 20–23, Trp-24, Arg-32, His-36, and 64–66; these read GNGR and STD. Asn-67 (proton acceptor) is an active-site residue. Substrate is bound by residues Trp-68, Arg-70, Arg-180, and 186-188; that span reads RLS. Glu-199 lines the Mg(2+) pocket.

The protein belongs to the UPP synthase family. Homodimer. Requires Mg(2+) as cofactor.

Its function is as follows. Catalyzes the condensation of isopentenyl diphosphate (IPP) with allylic pyrophosphates generating different type of terpenoids. This chain is Isoprenyl transferase 1, found in Bradyrhizobium diazoefficiens (strain JCM 10833 / BCRC 13528 / IAM 13628 / NBRC 14792 / USDA 110).